The sequence spans 302 residues: Quinolinate synthase (302 aa).

Residues H24 and S41 each contribute to the iminosuccinate site. C86 is a binding site for [4Fe-4S] cluster. Residues 112–114 (YVN) and S129 contribute to the iminosuccinate site. A [4Fe-4S] cluster-binding site is contributed by C171. Residues 197–199 (HPE) and T214 each bind iminosuccinate. C259 provides a ligand contact to [4Fe-4S] cluster.

This sequence belongs to the quinolinate synthase family. Type 2 subfamily. The cofactor is [4Fe-4S] cluster.

The protein localises to the cytoplasm. The catalysed reaction is iminosuccinate + dihydroxyacetone phosphate = quinolinate + phosphate + 2 H2O + H(+). It functions in the pathway cofactor biosynthesis; NAD(+) biosynthesis; quinolinate from iminoaspartate: step 1/1. In terms of biological role, catalyzes the condensation of iminoaspartate with dihydroxyacetone phosphate to form quinolinate. The chain is Quinolinate synthase from Dehalococcoides mccartyi (strain CBDB1).